A 376-amino-acid polypeptide reads, in one-letter code: Chanoclavine-I aldehyde reductase easA (376 aa).

Residues 29–31 (PTT), A64, Q106, and H173 contribute to the FMN site. Residues H173 and N176 each coordinate substrate. The active-site Proton donor is Y178. FMN is bound by residues K225, G297, 323–324 (GR), and R324. Y351 is a binding site for substrate.

Belongs to the NADH:flavin oxidoreductase/NADH oxidase family. FMN serves as cofactor.

It catalyses the reaction dihydrochanoclavine-I aldehyde + NADP(+) = chanoclavine-I aldehyde + NADPH + H(+). It functions in the pathway alkaloid biosynthesis; ergot alkaloid biosynthesis. Its function is as follows. Aldehyde reductase; part of the gene cluster that mediates the biosynthesis of fumiclavanine C, a fungal ergot alkaloid. DmaW catalyzes the first step of ergot alkaloid biosynthesis by condensing dimethylallyl diphosphate (DMAP) and tryptophan to form 4-dimethylallyl-L-tryptophan. The second step is catalyzed by the methyltransferase easF that methylates 4-dimethylallyl-L-tryptophan in the presence of S-adenosyl-L-methionine, resulting in the formation of 4-dimethylallyl-L-abrine. The catalase easC and the FAD-dependent oxidoreductase easE then transform 4-dimethylallyl-L-abrine to chanoclavine-I which is further oxidized by EasD in the presence of NAD(+), resulting in the formation of chanoclavine-I aldehyde. EasA reduces chanoclavine-I aldehyde to dihydrochanoclavine-I aldehyde that spontaneously dehydrates to form 6,8-dimethyl-6,7-didehydroergoline. EasG then catalyzes the reduction of 6,8-dimethyl-6,7-didehydroergoline to form festuclavine. Hydrolysis of festuclavine by easM then leads to the formation of fumigaclavine B which is in turn acetylated by easN to fumigaclavine A. Finally, easL catalyzes the conversion of fumigaclavine A into fumigaclavine C by attaching a dimethylallyl moiety to C-2 of the indole nucleus. The polypeptide is Chanoclavine-I aldehyde reductase easA (Aspergillus fumigatus (strain ATCC MYA-4609 / CBS 101355 / FGSC A1100 / Af293) (Neosartorya fumigata)).